The following is a 50-amino-acid chain: Large ribosomal subunit protein bL36B (50 aa).

This sequence belongs to the bacterial ribosomal protein bL36 family.

In Pseudomonas aeruginosa (strain UCBPP-PA14), this protein is Large ribosomal subunit protein bL36B.